A 536-amino-acid polypeptide reads, in one-letter code: Multifunctional cytochrome P450 monooxygenase af510 (536 aa).

Residues 4–24 (ELSTLQLSCVAFVAFMAVLVF) form a helical membrane-spanning segment. N-linked (GlcNAc...) asparagine glycans are attached at residues Asn210 and Asn293. Residue Cys448 coordinates heme.

Belongs to the cytochrome P450 family. It depends on heme as a cofactor.

It is found in the membrane. It catalyses the reaction (+)-exo-beta-bergamotene + 2 reduced [NADPH--hemoprotein reductase] + 3 O2 = 5-dehydro-6-demethoxyfumagillol + 2 oxidized [NADPH--hemoprotein reductase] + 3 H2O + 2 H(+). The protein operates within secondary metabolite biosynthesis; terpenoid biosynthesis. Functionally, multifunctional cytochrome P450 monooxygenase; part of the gene cluster that mediates the biosynthesis of fumagillin, a meroterpenoid that has numerous biological activities including irreversible inhibition of human type 2 methionine aminopeptidase (METAP2). Within the pathway, the multifunctional cytochrome P450 monooxygenase af510 acts as a 2,4,6-trichlorophenol monooxygenase that first performs the C-H hydroxylation at the bridgehead C5 position to yield 5R-hydroxyl-beta-trans-bergamotene. Subsequently, a four electron oxidation initiated at C-9 coupled to cleavage of the cyclobutane C5-C8 bond of the bicyclo[3.1.1] core yields the epoxyketone intermediate 5-keto-cordycol. An additional epoxidation reaction also catalyzed by af510 then furnishes the characteristic bisepoxide ketone 5-keto-demethoxyfumagillol. The pathway begins with the conversion of farnesyl pyrophosphate (FPP) to beta-trans-bergamotene by the membrane-bound beta-trans-bergamotene synthase af520. The multifunctional cytochrome P450 monooxygenase af510 then converts beta-trans-bergamotene into 5-keto-demethoxyfumagillol via several oxydation steps. 5-keto-demethoxyfumagillol is then subjected to successive C-6 hydroxylation and O-methylation by the dioxygenase af480 and O-methyltransferase af390-400, respectively, to yield 5-keto-fumagillol, which is then stereoselectively reduced by the keto-reductase af490 to 5R-hydroxy-seco-sesquiterpene. The next step is the polyketide transferase af380-catalyzed transfer of a dodecapentaenoyl group synthesized by the polyketide synthase af370 onto 5R-hydroxy-seco-sesquiterpene which leads to the production of prefumagillin. Finally, oxidative cleavage by the monooxygenase af470 converts prefumagillin to fumagillin. The sequence is that of Multifunctional cytochrome P450 monooxygenase af510 from Aspergillus fumigatus (strain ATCC MYA-4609 / CBS 101355 / FGSC A1100 / Af293) (Neosartorya fumigata).